Here is a 78-residue protein sequence, read N- to C-terminus: Defensin-like protein 171 (78 aa).

The N-terminal stretch at 1 to 23 is a signal peptide; it reads MAKTASSLVLPIIFLVMFALVEQ. 4 disulfide bridges follow: Cys27–Cys71, Cys34–Cys56, Cys40–Cys65, and Cys44–Cys67.

It belongs to the DEFL family.

It localises to the secreted. In Arabidopsis thaliana (Mouse-ear cress), this protein is Defensin-like protein 171 (LCR61).